Reading from the N-terminus, the 83-residue chain is Apolipoprotein C-I, acidic form (83 aa).

An N-terminal signal peptide occupies residues 1-26; that stretch reads MRLFLSLPVLVVVLSMVLEGPAPAQG.

The protein belongs to the apolipoprotein C1 family.

It is found in the secreted. This is Apolipoprotein C-I, acidic form (APOC1A) from Pan troglodytes (Chimpanzee).